The chain runs to 524 residues: GMP synthase [glutamine-hydrolyzing] (524 aa).

A Glutamine amidotransferase type-1 domain is found at 9-207 (RILILDFGSQ…VIHICQCIPN (199 aa)). Cysteine 86 (nucleophile) is an active-site residue. Residues histidine 181 and glutamate 183 contribute to the active site. Positions 208 to 399 (WTTKHIIEDS…LGLPADLIYR (192 aa)) constitute a GMPS ATP-PPase domain. An ATP-binding site is contributed by 235–241 (SGGVDSA).

Homodimer.

It carries out the reaction XMP + L-glutamine + ATP + H2O = GMP + L-glutamate + AMP + diphosphate + 2 H(+). Its pathway is purine metabolism; GMP biosynthesis; GMP from XMP (L-Gln route): step 1/1. Catalyzes the synthesis of GMP from XMP. The polypeptide is GMP synthase [glutamine-hydrolyzing] (Coxiella burnetii (strain RSA 493 / Nine Mile phase I)).